A 557-amino-acid chain; its full sequence is Dihydroxy-acid dehydratase (557 aa).

Cys-50 provides a ligand contact to [2Fe-2S] cluster. Asp-82 lines the Mg(2+) pocket. Position 123 (Cys-123) interacts with [2Fe-2S] cluster. Mg(2+) is bound by residues Asp-124 and Lys-125. Lys-125 carries the post-translational modification N6-carboxylysine. Cys-195 contributes to the [2Fe-2S] cluster binding site. Glu-447 is a binding site for Mg(2+). Ser-473 acts as the Proton acceptor in catalysis.

Belongs to the IlvD/Edd family. As to quaternary structure, homodimer. [2Fe-2S] cluster is required as a cofactor. Mg(2+) serves as cofactor.

It carries out the reaction (2R)-2,3-dihydroxy-3-methylbutanoate = 3-methyl-2-oxobutanoate + H2O. The enzyme catalyses (2R,3R)-2,3-dihydroxy-3-methylpentanoate = (S)-3-methyl-2-oxopentanoate + H2O. It functions in the pathway amino-acid biosynthesis; L-isoleucine biosynthesis; L-isoleucine from 2-oxobutanoate: step 3/4. It participates in amino-acid biosynthesis; L-valine biosynthesis; L-valine from pyruvate: step 3/4. In terms of biological role, functions in the biosynthesis of branched-chain amino acids. Catalyzes the dehydration of (2R,3R)-2,3-dihydroxy-3-methylpentanoate (2,3-dihydroxy-3-methylvalerate) into 2-oxo-3-methylpentanoate (2-oxo-3-methylvalerate) and of (2R)-2,3-dihydroxy-3-methylbutanoate (2,3-dihydroxyisovalerate) into 2-oxo-3-methylbutanoate (2-oxoisovalerate), the penultimate precursor to L-isoleucine and L-valine, respectively. This is Dihydroxy-acid dehydratase from Nitrosospira multiformis (strain ATCC 25196 / NCIMB 11849 / C 71).